We begin with the raw amino-acid sequence, 622 residues long: FERM domain-containing protein 6 (622 aa).

The region spanning 16–328 is the FERM domain; that stretch reads RRVCIFLPND…NSHRLYMNLQ (313 aa). Residues 357 to 452 form a disordered region; that stretch reads LDMDPLEKRS…KDRLEEDSQD (96 aa). Composition is skewed to low complexity over residues 384–395 and 425–438; these read HSTASHSSSHTS and SSMTSHGSSHTSGV. S522 carries the phosphoserine modification. T523 bears the Phosphothreonine mark. Phosphoserine is present on residues S525, S542, and S544.

Its subcellular location is the cytoplasm. The protein localises to the cell membrane. The polypeptide is FERM domain-containing protein 6 (Frmd6) (Mus musculus (Mouse)).